Consider the following 541-residue polypeptide: Cytochrome P450 monooxygenase claW (541 aa).

The chain crosses the membrane as a helical span at residues 12–32; the sequence is VINALVILFSFWAFLSLIRVI. Residue Cys480 participates in heme binding.

It belongs to the cytochrome P450 family. Heme is required as a cofactor.

The protein localises to the membrane. It functions in the pathway secondary metabolite biosynthesis; terpenoid biosynthesis. Its function is as follows. Cytochrome P450 monooxygenase; part of the gene cluster that mediates the biosynthesis of clavilactone A, a meroterpenoid that features a unique benzo-fused ten-membered carbocyclic ring unit with an alpha,beta-epoxy-gamma-lactone moiety, forming an intriguing 10/5/3 tricyclic nested skeleton. Cytochrome P450 monooxygenases claO, claP, claQ, claU, and claW are close orthologs, suggesting that a redundant function or pseudogenes are present in the cla cluster. These monoxygenases are not involved in clavilactone A biosynthesis nor its modification. ClaR, ClaS and ClaT are sufficient to produce clavilactone A. The biosynthesis begins with the prenyltransferase claS that transfers geranyl pyrophosphate (GPP) to hydroquinone to produces geranylhydroquinone. The cytochrome P450 monooxygenase claR then catalyzes the diradical coupling reaction between the intramolecular hydroquinone and allyl moieties to form the benzo-fused ten-membered carbocyclic ring unit of wigantol. Finally the cytochrome P450 monooxygenase claT exquisitely and stereoselectively assembles the alpha,beta-epoxy-gamma-lactone moiety, producing clavilactone A via arnebinol A. The protein is Cytochrome P450 monooxygenase claW of Ampulloclitocybe clavipes (Club foot).